The chain runs to 442 residues: Radical S-adenosyl methionine domain-containing protein 1, mitochondrial (442 aa).

A mitochondrion-targeting transit peptide spans 1–17; sequence MVPSGVRTGRWVAAARA. In terms of domain architecture, Radical SAM core spans 34-270; sequence ESASTRAALY…RTVLRDAGFR (237 aa). Tyrosine 43 contributes to the S-adenosyl-L-methionine binding site. [4Fe-4S] cluster-binding residues include cysteine 49, cysteine 53, and cysteine 56. S-adenosyl-L-methionine is bound by residues glycine 98, 99 to 100, glutamate 131, glutamine 158, arginine 170, and aspartate 195; that span reads GT.

The protein belongs to the anaerobic coproporphyrinogen-III oxidase family. HemW subfamily. [4Fe-4S] cluster is required as a cofactor.

The protein resides in the mitochondrion. Its function is as follows. May be a heme chaperone, appears to bind heme. Homologous bacterial proteins do not have oxygen-independent coproporphyrinogen-III oxidase activity. Binds 1 [4Fe-4S] cluster. The cluster is coordinated with 3 cysteines and an exchangeable S-adenosyl-L-methionine. The protein is Radical S-adenosyl methionine domain-containing protein 1, mitochondrial (Rsad1) of Mus musculus (Mouse).